Consider the following 1342-residue polypeptide: DNA-directed RNA polymerase subunit beta (1342 aa).

It belongs to the RNA polymerase beta chain family. The RNAP catalytic core consists of 2 alpha, 1 beta, 1 beta' and 1 omega subunit. When a sigma factor is associated with the core the holoenzyme is formed, which can initiate transcription.

The catalysed reaction is RNA(n) + a ribonucleoside 5'-triphosphate = RNA(n+1) + diphosphate. In terms of biological role, DNA-dependent RNA polymerase catalyzes the transcription of DNA into RNA using the four ribonucleoside triphosphates as substrates. The polypeptide is DNA-directed RNA polymerase subunit beta (Yersinia pseudotuberculosis serotype O:1b (strain IP 31758)).